Consider the following 401-residue polypeptide: Elongation factor Tu 1 (401 aa).

Positions 10–209 (KPHVNVGTIG…AVDEYIPTPV (200 aa)) constitute a tr-type G domain. Residues 19–26 (GHVDHGKT) form a G1 region. 19 to 26 (GHVDHGKT) is a GTP binding site. Threonine 26 is a Mg(2+) binding site. Positions 60–64 (GITIA) are G2. The G3 stretch occupies residues 81-84 (DCPG). Residues 81–85 (DCPGH) and 136–139 (NKVD) each bind GTP. Residues 136 to 139 (NKVD) are G4. Residues 174-176 (SAL) form a G5 region.

Belongs to the TRAFAC class translation factor GTPase superfamily. Classic translation factor GTPase family. EF-Tu/EF-1A subfamily. As to quaternary structure, monomer.

The protein resides in the cytoplasm. It catalyses the reaction GTP + H2O = GDP + phosphate + H(+). In terms of biological role, GTP hydrolase that promotes the GTP-dependent binding of aminoacyl-tRNA to the A-site of ribosomes during protein biosynthesis. The chain is Elongation factor Tu 1 from Roseiflexus sp. (strain RS-1).